The chain runs to 408 residues: Sporulation integral membrane protein YlbJ (408 aa).

8 helical membrane passes run 6-26 (INTLLIASFFLFLTATVISHP), 43-63 (VVFPSLLPFFILSELLIGFGI), 81-101 (VPGVGGFVLAMGMASGNPAGA), 131-151 (LFIFGAVAVGFFQNASLGILL), 214-234 (VTSSVQTLLMVGGFIILFSVF), 294-314 (IIVSFILGFSGFSVQAQVAGI), 324-344 (PFFIARLLQGVYAAVFVMLLW), and 377-397 (LLVQIGPAVTLCALFTYIIIF).

The protein localises to the cell membrane. Required for spore cortex formation. The sequence is that of Sporulation integral membrane protein YlbJ (ylbJ) from Bacillus subtilis (strain 168).